Here is a 328-residue protein sequence, read N- to C-terminus: D-cysteine desulfhydrase (328 aa).

N6-(pyridoxal phosphate)lysine is present on lysine 51.

Belongs to the ACC deaminase/D-cysteine desulfhydrase family. Homodimer. Pyridoxal 5'-phosphate serves as cofactor.

The catalysed reaction is D-cysteine + H2O = hydrogen sulfide + pyruvate + NH4(+) + H(+). Its function is as follows. Catalyzes the alpha,beta-elimination reaction of D-cysteine and of several D-cysteine derivatives. It could be a defense mechanism against D-cysteine. The polypeptide is D-cysteine desulfhydrase (Escherichia coli O6:H1 (strain CFT073 / ATCC 700928 / UPEC)).